We begin with the raw amino-acid sequence, 460 residues long: L-seryl-tRNA(Sec) selenium transferase (460 aa).

The residue at position 293 (K293) is an N6-(pyridoxal phosphate)lysine.

Belongs to the SelA family. Pyridoxal 5'-phosphate is required as a cofactor.

It is found in the cytoplasm. The enzyme catalyses L-seryl-tRNA(Sec) + selenophosphate + H(+) = L-selenocysteinyl-tRNA(Sec) + phosphate. The protein operates within aminoacyl-tRNA biosynthesis; selenocysteinyl-tRNA(Sec) biosynthesis; selenocysteinyl-tRNA(Sec) from L-seryl-tRNA(Sec) (bacterial route): step 1/1. Converts seryl-tRNA(Sec) to selenocysteinyl-tRNA(Sec) required for selenoprotein biosynthesis. This Pasteurella multocida (strain Pm70) protein is L-seryl-tRNA(Sec) selenium transferase.